The following is a 344-amino-acid chain: GTPase Obg (344 aa).

Residues 1–12 are compositionally biased toward polar residues; that stretch reads MFVDSASFSVSS. A disordered region spans residues 1 to 36; sequence MFVDSASFSVSSGKGGPGCASFRREKHVPLGGPDGG. The Obg domain maps to 1–158; it reads MFVDSASFSV…RNIRLELKLI (158 aa). One can recognise an OBG-type G domain in the interval 159–341; it reads ADVGLVGFPN…LKFGLLEILK (183 aa). Residues 165–172, 190–194, 212–215, 280–283, and 322–324 contribute to the GTP site; these read GFPNVGKS, FTTLT, DIPG, TRLD, and SSV. Positions 172 and 192 each coordinate Mg(2+).

Belongs to the TRAFAC class OBG-HflX-like GTPase superfamily. OBG GTPase family. Monomer. Requires Mg(2+) as cofactor.

The protein resides in the cytoplasm. Its function is as follows. An essential GTPase which binds GTP, GDP and possibly (p)ppGpp with moderate affinity, with high nucleotide exchange rates and a fairly low GTP hydrolysis rate. Plays a role in control of the cell cycle, stress response, ribosome biogenesis and in those bacteria that undergo differentiation, in morphogenesis control. In Campylobacter fetus subsp. fetus (strain 82-40), this protein is GTPase Obg.